Here is a 229-residue protein sequence, read N- to C-terminus: Aquaporin Z (229 aa).

Transmembrane regions (helical) follow at residues 8 to 28 and 33 to 53; these read FLGT…AAGF and IGFA…AYAI. The NPA 1 signature appears at 62 to 64; it reads NPA. The next 3 helical transmembrane spans lie at 88-108, 129-149, and 158-178; these read VLGA…GAGF, LLAA…VIMG, and GFAP…SIPV. An NPA 2 motif is present at residues 184–186; that stretch reads NPA. Residues 192–212 traverse the membrane as a helical segment; that stretch reads ALFVGGWAVQQLWLFWLAPII.

Belongs to the MIP/aquaporin (TC 1.A.8) family. Homotetramer.

Its subcellular location is the cell inner membrane. It carries out the reaction H2O(in) = H2O(out). Its function is as follows. Channel that permits osmotically driven movement of water in both directions. It is involved in the osmoregulation and in the maintenance of cell turgor during volume expansion in rapidly growing cells. It mediates rapid entry or exit of water in response to abrupt changes in osmolarity. The protein is Aquaporin Z of Chromobacterium violaceum (strain ATCC 12472 / DSM 30191 / JCM 1249 / CCUG 213 / NBRC 12614 / NCIMB 9131 / NCTC 9757 / MK).